A 128-amino-acid chain; its full sequence is Ribonuclease P protein component (128 aa).

The protein belongs to the RnpA family. In terms of assembly, consists of a catalytic RNA component (M1 or rnpB) and a protein subunit.

It catalyses the reaction Endonucleolytic cleavage of RNA, removing 5'-extranucleotides from tRNA precursor.. In terms of biological role, RNaseP catalyzes the removal of the 5'-leader sequence from pre-tRNA to produce the mature 5'-terminus. It can also cleave other RNA substrates such as 4.5S RNA. The protein component plays an auxiliary but essential role in vivo by binding to the 5'-leader sequence and broadening the substrate specificity of the ribozyme. This is Ribonuclease P protein component from Rhizobium meliloti (strain 1021) (Ensifer meliloti).